The sequence spans 279 residues: Pantothenate synthetase (279 aa).

26–33 contributes to the ATP binding site; the sequence is MGNLHEGH. His33 serves as the catalytic Proton donor. A (R)-pantoate-binding site is contributed by Gln57. Gln57 is a beta-alanine binding site. 144 to 147 is an ATP binding site; sequence GKKD. Residue Gln150 coordinates (R)-pantoate. ATP contacts are provided by residues Val173 and 181–184; that span reads LSSR.

It belongs to the pantothenate synthetase family. In terms of assembly, homodimer.

It localises to the cytoplasm. It catalyses the reaction (R)-pantoate + beta-alanine + ATP = (R)-pantothenate + AMP + diphosphate + H(+). It functions in the pathway cofactor biosynthesis; (R)-pantothenate biosynthesis; (R)-pantothenate from (R)-pantoate and beta-alanine: step 1/1. In terms of biological role, catalyzes the condensation of pantoate with beta-alanine in an ATP-dependent reaction via a pantoyl-adenylate intermediate. This Burkholderia lata (strain ATCC 17760 / DSM 23089 / LMG 22485 / NCIMB 9086 / R18194 / 383) protein is Pantothenate synthetase.